The following is a 271-amino-acid chain: MKTYRAKRKYLSESEDDVFSSSPTQSPETSPLQPPNESRLNIKAAQAVSPCQKRAKVVKKPAKTKAPVQMTLSLGQTTSTTCKTCGMTYQVAYGPDISAHKSFHSTALNGPKWKPSVSAVVVDKSKTYTVYKSRLLSHPCVSQFLKLVNSELNAPEPILSSQAAVYVYVVDQRAVGCVLVDRITKCRHVDIQTGTLGLKEYPAVMGVSRMYVSQLFRRTGIVTKLLDLAKSDFIYGMELEKNQVAFTQPSEGGLKVAENWAGTVRVYREGE.

The segment at methionine 1–serine 38 is disordered. Residues serine 20–proline 31 show a composition bias toward low complexity. The CCHH-type zinc finger occupies threonine 80 to histidine 104.

Belongs to the acetyltransferase family. ECO subfamily.

The protein localises to the nucleus. In terms of biological role, probable acetyltransferase required for the establishment of sister chromatid cohesion and couple the processes of cohesion and DNA replication to ensure that only sister chromatids become paired together. In contrast to the structural cohesins, the deposition and establishment factors are required only during S phase. Acts by acetylating the cohesin complex component SMC3. The polypeptide is N-acetyltransferase ECO1 (ECO1) (Yarrowia lipolytica (strain CLIB 122 / E 150) (Yeast)).